Here is a 526-residue protein sequence, read N- to C-terminus: CTP synthase (526 aa).

The interval 1 to 264 is amidoligase domain; the sequence is MPQRFIVVTG…HKLIAKELDI (264 aa). Serine 14 contacts CTP. Serine 14 provides a ligand contact to UTP. ATP-binding positions include 15-20 and aspartate 72; that span reads GIGKGI. Mg(2+)-binding residues include aspartate 72 and glutamate 138. CTP contacts are provided by residues 145–147, 185–190, and lysine 221; these read DIE and KTKPTQ. UTP-binding positions include 185 to 190 and lysine 221; that span reads KTKPTQ. The 245-residue stretch at 282-526 folds into the Glutamine amidotransferase type-1 domain; it reads KIGIVGKYLG…VKAAGGKIND (245 aa). Glycine 342 contacts L-glutamine. Cysteine 369 acts as the Nucleophile; for glutamine hydrolysis in catalysis. Residues 370 to 373, glutamate 393, and arginine 451 each bind L-glutamine; that span reads LGMQ. Catalysis depends on residues histidine 499 and glutamate 501.

This sequence belongs to the CTP synthase family. As to quaternary structure, homotetramer.

It catalyses the reaction UTP + L-glutamine + ATP + H2O = CTP + L-glutamate + ADP + phosphate + 2 H(+). The enzyme catalyses L-glutamine + H2O = L-glutamate + NH4(+). It carries out the reaction UTP + NH4(+) + ATP = CTP + ADP + phosphate + 2 H(+). It participates in pyrimidine metabolism; CTP biosynthesis via de novo pathway; CTP from UDP: step 2/2. Its activity is regulated as follows. Allosterically activated by GTP, when glutamine is the substrate; GTP has no effect on the reaction when ammonia is the substrate. The allosteric effector GTP functions by stabilizing the protein conformation that binds the tetrahedral intermediate(s) formed during glutamine hydrolysis. Inhibited by the product CTP, via allosteric rather than competitive inhibition. Catalyzes the ATP-dependent amination of UTP to CTP with either L-glutamine or ammonia as the source of nitrogen. Regulates intracellular CTP levels through interactions with the four ribonucleotide triphosphates. This is CTP synthase from Thermosipho africanus (strain TCF52B).